The following is a 319-amino-acid chain: Vomeronasal type-1 receptor 96 (319 aa).

The Extracellular segment spans residues 1–19 (MNKVNILPSDTNIKITLFS). A helical transmembrane segment spans residues 20–40 (EVSVGISANSVLFFAHLCMFF). Residues 41–49 (EENRSKPID) are Cytoplasmic-facing. A helical transmembrane segment spans residues 50-70 (LCIAFLSLTQLMLLVTMGLIA). The Extracellular portion of the chain corresponds to 71-93 (ADMFMSQGIWDSTTCRSIIYFHR). A disulfide bridge connects residues C85 and C172. The chain crosses the membrane as a helical span at residues 94–114 (LLRGFNLCAACLLHILWTFTL). The Cytoplasmic segment spans residues 115-134 (SPRSSCLTKFKHKSPHHISC). A helical transmembrane segment spans residues 135 to 155 (AFFSLCVLYMLFSSHLFVLII). The Extracellular portion of the chain corresponds to 156-193 (ATSNLTSDHFMYVTQSCSILPMSYSRTTMFSLVMVTRE). N-linked (GlcNAc...) asparagine glycosylation occurs at N159. The helical transmembrane segment at 194-214 (AFLISLMALFSGYMVTLLWRH) threads the bilayer. Residues 215 to 238 (KKQVQHLHSTSLSSKSSPQQRATR) lie on the Cytoplasmic side of the membrane. The chain crosses the membrane as a helical span at residues 239–259 (TILLLMSFFVVLYILDIVIFQ). The Extracellular portion of the chain corresponds to 260–269 (SRTKFKDGSM). A helical membrane pass occupies residues 270–290 (FYSLHIIVSHSYATISPFVFI). The Cytoplasmic portion of the chain corresponds to 291-319 (FSDKRIIKFLGSMSGRIINICLFSDGYGP).

Belongs to the G-protein coupled receptor 1 family.

The protein localises to the cell membrane. Its function is as follows. Putative pheromone receptor implicated in the regulation of social as well as reproductive behavior. In Rattus norvegicus (Rat), this protein is Vomeronasal type-1 receptor 96 (Vom1r96).